We begin with the raw amino-acid sequence, 237 residues long: Ribonuclease PH (237 aa).

Phosphate-binding positions include Arg-86 and 124-126 (GTR).

Belongs to the RNase PH family. As to quaternary structure, homohexameric ring arranged as a trimer of dimers.

It catalyses the reaction tRNA(n+1) + phosphate = tRNA(n) + a ribonucleoside 5'-diphosphate. Phosphorolytic 3'-5' exoribonuclease that plays an important role in tRNA 3'-end maturation. Removes nucleotide residues following the 3'-CCA terminus of tRNAs; can also add nucleotides to the ends of RNA molecules by using nucleoside diphosphates as substrates, but this may not be physiologically important. Probably plays a role in initiation of 16S rRNA degradation (leading to ribosome degradation) during starvation. In Methylorubrum extorquens (strain CM4 / NCIMB 13688) (Methylobacterium extorquens), this protein is Ribonuclease PH.